A 564-amino-acid chain; its full sequence is Hexose transporter HXT17 (564 aa).

Residues 1–12 (MQSSTESDRDIQ) show a composition bias toward basic and acidic residues. The tract at residues 1–22 (MQSSTESDRDIQDGPDADIHVA) is disordered. Topologically, residues 1–52 (MQSSTESDRDIQDGPDADIHVAPPVEKEWSDGFDDNEVINGDNVEPPKRGLI) are cytoplasmic. Residues 53-73 (GYLVIYLLCYPISFGGFLPGW) form a helical membrane-spanning segment. Residues 74–109 (DSGITAGFINMDNFKMNFGSYKHSTGEYYLSNVRMG) lie on the Extracellular side of the membrane. The helical transmembrane segment at 110–130 (LLVAMFSIGCAIGGLIFARLA) threads the bilayer. The Cytoplasmic portion of the chain corresponds to 131-136 (DTLGRR). Residues 137-157 (LAIVIVVLVYMVGAIIQISSN) traverse the membrane as a helical segment. Residues 158–167 (HKWYQYFVGK) lie on the Extracellular side of the membrane. Residues 168-188 (IIYGLGAGGCSVLCPMLLSEI) form a helical membrane-spanning segment. The Cytoplasmic segment spans residues 189–194 (APTDLR). Residues 195-215 (GGLVSLYQLNMTFGIFLGYCS) traverse the membrane as a helical segment. Residues 216–229 (VYGTRKYDNTAQWR) lie on the Extracellular side of the membrane. A helical transmembrane segment spans residues 230 to 250 (VPLGLCFLWTLIIIIGMLLVP). Topologically, residues 251-333 (ESPRYLIECE…VQTFLQLTGE (83 aa)) are cytoplasmic. The helical transmembrane segment at 334–350 (NYFFFYGTTIFKSVGLT) threads the bilayer. Topologically, residues 351 to 356 (DGFETS) are extracellular. A helical transmembrane segment spans residues 357-374 (IVLGTVNFFSTIIAVMVV). Over 375 to 381 (DKIGRRK) the chain is Cytoplasmic. Residues 382–402 (CLLFGAAGMMACMVIFASIGV) traverse the membrane as a helical segment. Topologically, residues 403-424 (KCLYPHGQDGPSSKGAGNAMIV) are extracellular. A helical membrane pass occupies residues 425-445 (FTCFYIFCFATTWAPVAYIVV). The Cytoplasmic portion of the chain corresponds to 446-462 (AESFPSKVKSRAMSIST). Residues 463 to 483 (ACNWLWQFLIGFFTPFITGSI) traverse the membrane as a helical segment. His484 is a topological domain (extracellular). A helical membrane pass occupies residues 485–505 (FYYGYVFVGCLVAMFLYVFFF). The Cytoplasmic segment spans residues 506-564 (LPETIGLSLEEIQLLYEEGIKPWKSASWVPPSRRGIPSEESKTEKKDWKKFLKFSKGSD).

The protein belongs to the major facilitator superfamily. Sugar transporter (TC 2.A.1.1) family.

It localises to the membrane. Functionally, probable glucose transporter. This Saccharomyces cerevisiae (strain ATCC 204508 / S288c) (Baker's yeast) protein is Hexose transporter HXT17 (HXT17).